Consider the following 392-residue polypeptide: Stilbene synthase 3 (392 aa).

55 to 58 (KFNR) contributes to the substrate binding site. Residue C164 is part of the active site. Residues L267 and 305 to 307 (GGP) contribute to the substrate site.

The protein belongs to the thiolase-like superfamily. Chalcone/stilbene synthases family. As to quaternary structure, homodimer.

Its subcellular location is the cytoplasm. It catalyses the reaction 4-coumaroyl-CoA + 3 malonyl-CoA + 3 H(+) = trans-resveratrol + 4 CO2 + 4 CoA. It functions in the pathway phytoalexin biosynthesis; 3,4',5-trihydroxystilbene biosynthesis; 3,4',5-trihydroxystilbene from trans-4-coumarate: step 2/2. In terms of biological role, mediates resistance to pathogens which are sensitive to stilbenes. The chain is Stilbene synthase 3 from Vitis vinifera (Grape).